The sequence spans 350 residues: Biotin synthase (350 aa).

The 225-residue stretch at 54 to 278 (REIQLSTLLS…TMPQSYVRLS (225 aa)) folds into the Radical SAM core domain. [4Fe-4S] cluster is bound by residues Cys-69, Cys-73, and Cys-76. Residues Cys-113, Cys-144, Cys-204, and Arg-276 each contribute to the [2Fe-2S] cluster site.

It belongs to the radical SAM superfamily. Biotin synthase family. In terms of assembly, homodimer. The cofactor is [4Fe-4S] cluster. It depends on [2Fe-2S] cluster as a cofactor.

It catalyses the reaction (4R,5S)-dethiobiotin + (sulfur carrier)-SH + 2 reduced [2Fe-2S]-[ferredoxin] + 2 S-adenosyl-L-methionine = (sulfur carrier)-H + biotin + 2 5'-deoxyadenosine + 2 L-methionine + 2 oxidized [2Fe-2S]-[ferredoxin]. The protein operates within cofactor biosynthesis; biotin biosynthesis; biotin from 7,8-diaminononanoate: step 2/2. Functionally, catalyzes the conversion of dethiobiotin (DTB) to biotin by the insertion of a sulfur atom into dethiobiotin via a radical-based mechanism. The sequence is that of Biotin synthase from Neisseria meningitidis serogroup C / serotype 2a (strain ATCC 700532 / DSM 15464 / FAM18).